The following is a 309-amino-acid chain: Taste receptor type 2 member 46 (309 aa).

Residue Met-1 is a topological domain, extracellular. The helical transmembrane segment at 2–22 threads the bilayer; the sequence is ITFLPIIFSILIVVTFVIGNF. The Cytoplasmic portion of the chain corresponds to 23-46; it reads ANGFIALANSIEWFKRQKISFADQ. Residues 47 to 67 form a helical membrane-spanning segment; it reads ILTALAVSRVGLLWVLLLNWY. At 68–86 the chain is on the extracellular side; it reads ATELNPAFYSIEVRITAYN. The helical transmembrane segment at 87–107 threads the bilayer; sequence LWAVINHFSNWLATSLSIFYL. The Cytoplasmic portion of the chain corresponds to 108–126; that stretch reads LKIANFSNLIFLCLKRRVK. A helical membrane pass occupies residues 127 to 147; the sequence is SVVLVILLGPLLFLVCHLFVI. The Extracellular portion of the chain corresponds to 148–178; sequence NMNQIIWTKEYEGNMTWKIKLRSAMYLSNTT. 2 N-linked (GlcNAc...) asparagine glycosylation sites follow: Asn-161 and Asn-176. Residues 179–199 form a helical membrane-spanning segment; sequence VTILANLVPFTLTLISFLLLI. Topologically, residues 200–229 are cytoplasmic; sequence CSLCKHLEKMQLHGKGSQDPSMKVHIKALQ. A helical transmembrane segment spans residues 230–250; sequence TVTSFLLLCAIYFLSIIMSVW. Residues 251–259 lie on the Extracellular side of the membrane; that stretch reads SFESLENKP. A helical membrane pass occupies residues 260 to 280; the sequence is VFMFCEAITFSYPSTHPFILI. Over 281–309 the chain is Cytoplasmic; the sequence is WGNKKLKQTFLSVLWHVRYWVKGEKPSXP.

The protein belongs to the G-protein coupled receptor T2R family.

It localises to the membrane. The protein resides in the cell projection. The protein localises to the cilium membrane. Receptor that may play a role in the perception of bitterness and is gustducin-linked. May play a role in sensing the chemical composition of the gastrointestinal content. The activity of this receptor may stimulate alpha gustducin, mediate PLC-beta-2 activation and lead to the gating of TRPM5. In airway epithelial cells, binding of bitter compounds increases the intracellular calcium ion concentration and stimulates ciliary beat frequency. In Pan troglodytes (Chimpanzee), this protein is Taste receptor type 2 member 46 (TAS2R46).